The chain runs to 78 residues: Large ribosomal subunit protein bL28 (78 aa).

Positions 1–23 are disordered; that stretch reads MSRVCQVSGKRVQTGNNVSHANN. The span at 11 to 22 shows a compositional bias: polar residues; the sequence is RVQTGNNVSHAN.

This sequence belongs to the bacterial ribosomal protein bL28 family.

The protein is Large ribosomal subunit protein bL28 of Xanthomonas campestris pv. campestris (strain 8004).